Here is a 662-residue protein sequence, read N- to C-terminus: Interferon-induced GTP-binding protein Mx1 (662 aa).

At methionine 1 the chain carries N-acetylmethionine; in Interferon-induced GTP-binding protein Mx1; alternate. A Dynamin-type G domain is found at aspartate 67 to proline 340. The interval glycine 77–serine 84 is G1 motif. Glycine 77–serine 84 contributes to the GTP binding site. Residues valine 102–arginine 104 form a G2 motif region. The interval aspartate 178–glycine 181 is G3 motif. GTP contacts are provided by residues aspartate 178 to isoleucine 182 and threonine 247 to aspartate 250. The G4 motif stretch occupies residues threonine 247–aspartate 250. Residues lysine 279–glycine 282 are G5 motif. Positions leucine 341–glutamate 366 are bundle signaling element (BSE). Positions glutamate 366–cysteine 533 are middle domain. The tract at residues aspartate 367–glutamate 632 is stalk. The critical for lipid-binding stretch occupies residues lysine 554 to lysine 557. The 89-residue stretch at methionine 574 to glycine 662 folds into the GED domain.

This sequence belongs to the TRAFAC class dynamin-like GTPase superfamily. Dynamin/Fzo/YdjA family. In terms of assembly, homotetramer. Oligomerizes into multimeric filamentous or ring-like structures by virtue of its stalk domain. Oligomerization is critical for GTPase activity, protein stability, and recognition of viral target structures. Interacts with TRPC1, TRPC3, TRPC4, TRPC5, TRPC6 and TRPC7. Interacts with HSPA5. Interacts with DDX39A and DDX39B. Interacts with TUBB/TUBB5. The GTP-bound form interacts (via C-terminus) with THOV P5 protein. The GTP-bound form interacts with LACV protein N. Interacts with CCHFV protein N. Post-translationally, ISGylated.

Its subcellular location is the cytoplasm. The protein localises to the endoplasmic reticulum membrane. The protein resides in the perinuclear region. It localises to the nucleus. Interferon-induced dynamin-like GTPase with antiviral activity against a wide range of RNA viruses and some DNA viruses. Its target viruses include negative-stranded RNA viruses and HBV through binding and inactivation of their ribonucleocapsid. May also antagonize reoviridae and asfarviridae replication. Inhibits thogoto virus (THOV) replication by preventing the nuclear import of viral nucleocapsids. Inhibits La Crosse virus (LACV) replication by sequestering viral nucleoprotein in perinuclear complexes, preventing genome amplification, budding, and egress. Inhibits influenza A virus (IAV) replication by decreasing or delaying NP synthesis and by blocking endocytic traffic of incoming virus particles. Enhances ER stress-mediated cell death after influenza virus infection. May regulate the calcium channel activity of TRPCs. The chain is Interferon-induced GTP-binding protein Mx1 (MX1) from Homo sapiens (Human).